Reading from the N-terminus, the 209-residue chain is ATP-dependent Clp protease proteolytic subunit (209 aa).

Ser-106 acts as the Nucleophile in catalysis. Residue His-131 is part of the active site.

Belongs to the peptidase S14 family. Fourteen ClpP subunits assemble into 2 heptameric rings which stack back to back to give a disk-like structure with a central cavity, resembling the structure of eukaryotic proteasomes.

It localises to the cytoplasm. The enzyme catalyses Hydrolysis of proteins to small peptides in the presence of ATP and magnesium. alpha-casein is the usual test substrate. In the absence of ATP, only oligopeptides shorter than five residues are hydrolyzed (such as succinyl-Leu-Tyr-|-NHMec, and Leu-Tyr-Leu-|-Tyr-Trp, in which cleavage of the -Tyr-|-Leu- and -Tyr-|-Trp bonds also occurs).. Functionally, cleaves peptides in various proteins in a process that requires ATP hydrolysis. Has a chymotrypsin-like activity. Plays a major role in the degradation of misfolded proteins. This chain is ATP-dependent Clp protease proteolytic subunit, found in Brucella suis biovar 1 (strain 1330).